We begin with the raw amino-acid sequence, 594 residues long: Shugoshin (594 aa).

Residues 38–61 adopt a coiled-coil conformation; sequence KITDMETKVSELVQENVSLRSRLS. 4 disordered regions span residues 104-178, 201-266, 342-380, and 519-549; these read SGIH…KSSR, QLPI…TNKN, SKIK…RRTR, and TKQQ…RTKQ. Residues 220 to 240 adopt a coiled-coil conformation; the sequence is EEESQENKHTKEEREDEGKEN. Residues 224-239 are compositionally biased toward basic and acidic residues; the sequence is QENKHTKEEREDEGKE. Polar residues predominate over residues 252-261; sequence SVTNTGTECS. A compositionally biased stretch (basic residues) spans 343 to 355; it reads KIKHSMKHPRTKL. Positions 357-376 are enriched in basic and acidic residues; the sequence is GGQDDIMPHTDYDKDDEKRE. Polar residues-rich tracts occupy residues 519–532 and 539–549; these read TKQQ…SDPN and NSNVKPTRTKQ.

Belongs to the shugoshin family.

Its subcellular location is the nucleus. The protein resides in the chromosome. It localises to the centromere. In terms of biological role, plays a central role in chromosome cohesion during cell division by preventing premature dissociation of cohesin complex from centromeres after prophase, when most of cohesin complex dissociates from chromosomes arms. The sequence is that of Shugoshin (SGO1) from Kluyveromyces lactis (strain ATCC 8585 / CBS 2359 / DSM 70799 / NBRC 1267 / NRRL Y-1140 / WM37) (Yeast).